We begin with the raw amino-acid sequence, 414 residues long: WW domain-containing oxidoreductase (414 aa).

The disordered stretch occupies residues 1–23 (MAALKYAGLEDTDSEEELPPGWE). Positions 16 to 49 (EELPPGWEERTTKDGWVYYANHLEEKTQWEHPKS) constitute a WW 1 domain. The short motif at 50–55 (GKRKRV) is the Nuclear localization signal element. The region spanning 57–90 (GGLPYGWEQETDENGQVYFVDHINKRTTYLDPRL) is the WW 2 domain. Position 131–137 (131–137 (GANSGIG)) interacts with NADP(+). A substrate-binding site is contributed by Ser-260. The active-site Proton acceptor is Tyr-293.

It belongs to the short-chain dehydrogenases/reductases (SDR) family.

The protein resides in the cytoplasm. It is found in the mitochondrion. The protein localises to the golgi apparatus. It localises to the lysosome. Its function is as follows. Putative oxidoreductase. Acts as a tumor suppressor and plays a role in apoptosis. May function synergistically with p53/TP53 to control genotoxic stress-induced cell death. Plays a role in TGFB1 signaling and TGFB1-mediated cell death. May also play a role in tumor necrosis factor (TNF)-mediated cell death. Required for normal bone development. Inhibits Wnt signaling. The protein is WW domain-containing oxidoreductase (WWOX) of Gallus gallus (Chicken).